A 377-amino-acid chain; its full sequence is Phospho-N-acetylmuramoyl-pentapeptide-transferase (377 aa).

10 helical membrane-spanning segments follow: residues 27 to 47, 71 to 91, 94 to 114, 139 to 159, 182 to 202, 216 to 236, 252 to 272, 280 to 300, 305 to 325, and 354 to 374; these read TAFA…YVIE, GTPT…TLLW, LSDP…AIGF, ILAS…GSYS, VPHL…IVIV, GLAI…TYVS, MVGE…GFLW, IFMG…VAVV, LLLP…ILQV, and KVIV…LTTL.

This sequence belongs to the glycosyltransferase 4 family. MraY subfamily. Requires Mg(2+) as cofactor.

The protein localises to the cell inner membrane. It catalyses the reaction UDP-N-acetyl-alpha-D-muramoyl-L-alanyl-gamma-D-glutamyl-meso-2,6-diaminopimeloyl-D-alanyl-D-alanine + di-trans,octa-cis-undecaprenyl phosphate = di-trans,octa-cis-undecaprenyl diphospho-N-acetyl-alpha-D-muramoyl-L-alanyl-D-glutamyl-meso-2,6-diaminopimeloyl-D-alanyl-D-alanine + UMP. The protein operates within cell wall biogenesis; peptidoglycan biosynthesis. Its function is as follows. Catalyzes the initial step of the lipid cycle reactions in the biosynthesis of the cell wall peptidoglycan: transfers peptidoglycan precursor phospho-MurNAc-pentapeptide from UDP-MurNAc-pentapeptide onto the lipid carrier undecaprenyl phosphate, yielding undecaprenyl-pyrophosphoryl-MurNAc-pentapeptide, known as lipid I. This is Phospho-N-acetylmuramoyl-pentapeptide-transferase from Acidobacterium capsulatum (strain ATCC 51196 / DSM 11244 / BCRC 80197 / JCM 7670 / NBRC 15755 / NCIMB 13165 / 161).